The sequence spans 613 residues: Na(+)/H(+) antiporter NhaA 1 (613 aa).

Positions 1-24 are disordered; that stretch reads MTEASARTIGPLPSRFSRDPKTPR. The segment at 1 to 408 is na(+)/H(+) antiporter NhaA; it reads MTEASARTIG…DPARQDEARV (408 aa). 11 consecutive transmembrane segments (helical) span residues 29-49, 81-101, 110-130, 138-158, 168-188, 191-211, 231-251, 300-320, 337-357, 377-397, and 408-428; these read AAAA…NSPW, GLMA…FVIG, AVPV…FLTF, QAWG…LAVI, IFLL…IALF, DDLK…LAMV, IALY…AVLI, AVGP…NAGV, WGIV…ATAL, GGAA…DVAI, and VGVL…FRIT. Residues 409-613 form the Thioredoxin domain; sequence GVLIASVLAF…SLIRALEAGR (205 aa).

In the N-terminal section; belongs to the NhaA Na(+)/H(+) (TC 2.A.33) antiporter family.

Its subcellular location is the cell membrane. The enzyme catalyses Na(+)(in) + 2 H(+)(out) = Na(+)(out) + 2 H(+)(in). Its function is as follows. Na(+)/H(+) antiporter that extrudes sodium in exchange for external protons. In Mycobacterium sp. (strain JLS), this protein is Na(+)/H(+) antiporter NhaA 1.